Here is a 449-residue protein sequence, read N- to C-terminus: Protein CapK (449 aa).

It functions in the pathway capsule biogenesis; capsule polysaccharide biosynthesis. Functionally, required for the biosynthesis of type 1 capsular polysaccharide. This chain is Protein CapK (capK), found in Staphylococcus aureus.